The sequence spans 317 residues: Transcriptional regulator LsrR (317 aa).

The segment at residues Gln33 to Gln56 is a DNA-binding region (H-T-H motif).

It belongs to the SorC transcriptional regulatory family.

The protein localises to the cytoplasm. With respect to regulation, inactivated by phosphorylated autoinducer-2 (phospho-AI-2). Phospho-AI-2 acts by binding to LsrR, which is then unable to bind to the promoter regions, allowing the transcription of the target genes. Its function is as follows. Transcriptional regulator that represses the expression of the lsr operon in the absence of the quorum-sensing signaling molecule autoinducer 2 (AI-2). It also represses the expression of the lsrRK operon. Acts by binding directly to the lsrA and lsrR promoter regions. In the presence of phosphorylated autoinducer-2 (phospho-AI-2), LsrR is inactivated, leading to the transcription of the genes. The protein is Transcriptional regulator LsrR (lsrR) of Escherichia coli O139:H28 (strain E24377A / ETEC).